Reading from the N-terminus, the 150-residue chain is Large ribosomal subunit protein bL9 (150 aa).

This sequence belongs to the bacterial ribosomal protein bL9 family.

Its function is as follows. Binds to the 23S rRNA. This chain is Large ribosomal subunit protein bL9, found in Paraburkholderia phytofirmans (strain DSM 17436 / LMG 22146 / PsJN) (Burkholderia phytofirmans).